Here is a 292-residue protein sequence, read N- to C-terminus: Elongation factor Ts (292 aa).

The involved in Mg(2+) ion dislocation from EF-Tu stretch occupies residues 82 to 85; the sequence is TDFV.

Belongs to the EF-Ts family.

It is found in the cytoplasm. Functionally, associates with the EF-Tu.GDP complex and induces the exchange of GDP to GTP. It remains bound to the aminoacyl-tRNA.EF-Tu.GTP complex up to the GTP hydrolysis stage on the ribosome. In Bordetella parapertussis (strain 12822 / ATCC BAA-587 / NCTC 13253), this protein is Elongation factor Ts.